A 209-amino-acid polypeptide reads, in one-letter code: Ribonuclease HII (209 aa).

The RNase H type-2 domain maps to 25–209 (RRIAGIDEAG…ATFRGVREYL (185 aa)). A divalent metal cation contacts are provided by D31, E32, and D123.

It belongs to the RNase HII family. The cofactor is Mn(2+). Mg(2+) is required as a cofactor.

It is found in the cytoplasm. The catalysed reaction is Endonucleolytic cleavage to 5'-phosphomonoester.. Endonuclease that specifically degrades the RNA of RNA-DNA hybrids. The polypeptide is Ribonuclease HII (Syntrophotalea carbinolica (strain DSM 2380 / NBRC 103641 / GraBd1) (Pelobacter carbinolicus)).